We begin with the raw amino-acid sequence, 358 residues long: MAPQNLGTFCLLLLYLIGTVIAGRDFYKILGVPRSASIKDIKKAYRKLALQLHPDRNPDDPRAQEKFQDLGAAYEVLSDSEKRKQYDTYGEEGLKDGHQSSHGDIFSHFFGDFGFMFGGTPRQQDRNIPRGSDIIVDLEVTLEEVYAGNFVEVVRNKPVARQAPGKRKCNCRQEMRTTQLGPGRFQMTQEVVCDECPNVKLVNEERTLEVEIEPGVRDGMEYPFIGEGEPHVDGEPGDLRFRIKVVKHSIFERRGDDLYTNVTISLVESLVGFDMDITHLDGHKVHISRDKITRPGAKLWKKGEGLPNFDNNNIKGSLIITFDVDFPKEQLSEEAREGIKQLLKQGSVQKVYNGLQGY.

The signal sequence occupies residues 1-22; sequence MAPQNLGTFCLLLLYLIGTVIA. Residues 25–90 form the J domain; that stretch reads DFYKILGVPR…EKRKQYDTYG (66 aa). Threonine 188 is subject to Phosphothreonine. N-linked (GlcNAc...) asparagine glycosylation is present at asparagine 261.

In terms of assembly, part of a large chaperone multiprotein complex comprising DNAJB11, HSP90B1, HSPA5, HYOU, PDIA2, PDIA4, PDIA6, PPIB, SDF2L1, UGGT1 and very small amounts of ERP29, but not, or at very low levels, CALR nor CANX. Binds to denatured substrates in an ATP-independent manner. Interacts via the J domain with HSPA5 in an ATP-dependent manner. Post-translationally, contains high-mannose Endo H-sensitive carbohydrates. In terms of processing, cys-169, Cys-171, Cys-193 and Cys-196 form intramolecular disulfide bonds. The preferential partner for each Cys is not known.

It is found in the endoplasmic reticulum lumen. As a co-chaperone for HSPA5 it is required for proper folding, trafficking or degradation of proteins. Binds directly to both unfolded proteins that are substrates for ERAD and nascent unfolded peptide chains, but dissociates from the HSPA5-unfolded protein complex before folding is completed. May help recruiting HSPA5 and other chaperones to the substrate. Stimulates HSPA5 ATPase activity. It is necessary for maturation and correct trafficking of PKD1. This chain is DnaJ homolog subfamily B member 11 (DNAJB11), found in Bos taurus (Bovine).